The primary structure comprises 824 residues: Silver exporting P-type ATPase (824 aa).

Positions 89 to 112 are disordered; it reads ASEHHHHHDHHEVSPDKIKQSHRQ. Positions 98 to 112 are enriched in basic and acidic residues; the sequence is HHEVSPDKIKQSHRQ. 6 helical membrane-spanning segments follow: residues 167–187, 200–220, 234–254, 268–288, 427–447, and 455–475; these read FWLG…SHLF, TWLQ…PFFA, FTLV…ATVF, LVAI…LGQV, WFVP…SVWG, and GLIA…GLAT. Catalysis depends on Asp511, which acts as the 4-aspartylphosphate intermediate. Helical transmembrane passes span 764 to 784 and 785 to 805; these read IRQN…VAAG and LLYP…AMAL.

Belongs to the cation transport ATPase (P-type) (TC 3.A.3) family. Type IB subfamily.

Its subcellular location is the cell membrane. The enzyme catalyses Ag(+)(in) + ATP + H2O = Ag(+)(out) + ADP + phosphate + H(+). Its function is as follows. Component of the sil cation-efflux system that confers resistance to silver. The polypeptide is Silver exporting P-type ATPase (silP) (Salmonella typhimurium).